Here is a 139-residue protein sequence, read N- to C-terminus: Ribosome maturation factor RimP (139 aa).

The protein belongs to the RimP family.

It is found in the cytoplasm. Required for maturation of 30S ribosomal subunits. In Syntrophomonas wolfei subsp. wolfei (strain DSM 2245B / Goettingen), this protein is Ribosome maturation factor RimP.